The sequence spans 668 residues: UvrABC system protein B (668 aa).

The 387-residue stretch at 27 to 413 folds into the Helicase ATP-binding domain; it reads AGVQAGHRFQ…STQVVEQIIR (387 aa). 40 to 47 is a binding site for ATP; that stretch reads GATGTGKT. A Beta-hairpin motif is present at residues 93–116; the sequence is YYDYYQPEAYIPVTDTYIEKSASI. Residues 430-596 form the Helicase C-terminal domain; that stretch reads QVDDLYGEIR…PIVKKTSNAI (167 aa). In terms of domain architecture, UVR spans 628–663; sequence PPLIQDLEAKMKAAAQELAFEEAARYRDQIKRLRDR.

This sequence belongs to the UvrB family. As to quaternary structure, forms a heterotetramer with UvrA during the search for lesions. Interacts with UvrC in an incision complex.

The protein localises to the cytoplasm. The UvrABC repair system catalyzes the recognition and processing of DNA lesions. A damage recognition complex composed of 2 UvrA and 2 UvrB subunits scans DNA for abnormalities. Upon binding of the UvrA(2)B(2) complex to a putative damaged site, the DNA wraps around one UvrB monomer. DNA wrap is dependent on ATP binding by UvrB and probably causes local melting of the DNA helix, facilitating insertion of UvrB beta-hairpin between the DNA strands. Then UvrB probes one DNA strand for the presence of a lesion. If a lesion is found the UvrA subunits dissociate and the UvrB-DNA preincision complex is formed. This complex is subsequently bound by UvrC and the second UvrB is released. If no lesion is found, the DNA wraps around the other UvrB subunit that will check the other stand for damage. The polypeptide is UvrABC system protein B (Thermosynechococcus vestitus (strain NIES-2133 / IAM M-273 / BP-1)).